A 171-amino-acid polypeptide reads, in one-letter code: Translation initiation factor IF-3 (171 aa).

Belongs to the IF-3 family. In terms of assembly, monomer.

The protein localises to the cytoplasm. Functionally, IF-3 binds to the 30S ribosomal subunit and shifts the equilibrium between 70S ribosomes and their 50S and 30S subunits in favor of the free subunits, thus enhancing the availability of 30S subunits on which protein synthesis initiation begins. This chain is Translation initiation factor IF-3, found in Thermus thermophilus (strain ATCC BAA-163 / DSM 7039 / HB27).